The sequence spans 299 residues: Xyloglucan endotransglucosylase protein 6 (299 aa).

An N-terminal signal peptide occupies residues 1–25; that stretch reads MASSLTLPMAMAFTLLALSFASAMG. Positions 26-219 constitute a GH16 domain; that stretch reads GSMNSSRFDE…WSHAPFVASY (194 aa). Glu-105 serves as the catalytic Nucleophile. Glu-109 serves as the catalytic Proton donor. Glu-109 is a xyloglucan binding site. Residue Asn-113 is glycosylated (N-linked (GlcNAc...) asparagine). Xyloglucan contacts are provided by residues 122-124, 132-134, 198-199, and Gly-203; these read QTN, NRE, and DW. 2 disulfides stabilise this stretch: Cys-227–Cys-242 and Cys-281–Cys-294. Arg-286 is a binding site for xyloglucan.

Belongs to the glycosyl hydrolase 16 family. XTH group 1 subfamily. In terms of processing, contains at least one intrachain disulfide bond essential for its enzymatic activity. As to expression, highest expression in ripe leaves after full expansion. Also expressed in fruits, and at a lower level in flowers and stems (picked at anthesis).

Its subcellular location is the secreted. The protein resides in the cell wall. It is found in the extracellular space. The protein localises to the apoplast. The catalysed reaction is breaks a beta-(1-&gt;4) bond in the backbone of a xyloglucan and transfers the xyloglucanyl segment on to O-4 of the non-reducing terminal glucose residue of an acceptor, which can be a xyloglucan or an oligosaccharide of xyloglucan.. In terms of biological role, catalyzes xyloglucan endotransglycosylation (XET). Cleaves and religates xyloglucan polymers. Does not catalyze xyloglucan endohydrolysis (XEH). Probably involved in cell wall restructuring during postharvest fruit softening. The sequence is that of Xyloglucan endotransglucosylase protein 6 from Diospyros kaki (Kaki persimmon).